A 260-amino-acid chain; its full sequence is Cystine transporter (260 aa).

A PQ-loop 1 domain is found at 1-67; it reads MVSLDDILGI…QLYCWKMTGD (67 aa). The next 5 membrane-spanning stretches (helical) occupy residues 7-28, 40-62, 81-102, 118-138, and 151-175; these read ILGIVYVTSWSISMYPPIITNW, FVMLNTAGYSYLVISIFLQLYCW, FWYCLHGCLMNVVLLTQVVAGA, WYLRILLASLAIFSLLTVQFM, and TLAYCNNLFLLKISMSLIKYIPQVT. In terms of domain architecture, PQ-loop 2 spans 162–212; that stretch reads KISMSLIKYIPQVTHNSTRKSMDCFPIQGVFLDVTGGIASLLQLIWQLSND. The N-linked (GlcNAc...) asparagine glycan is linked to asparagine 177. 2 helical membrane passes run 185 to 205 and 227 to 247; these read CFPIQGVFLDVTGGIASLLQL and VGLSMVTLIFNFIFIMQWFVY.

The protein belongs to the cystinosin family.

The protein resides in the endosome membrane. The protein localises to the vacuole membrane. It carries out the reaction L-cystine(out) + H(+)(out) = L-cystine(in) + H(+)(in). Functionally, cystine/H(+) symporter that mediates export of cystine, the oxidized dimer of cysteine, from vacuoles/endodomes. This Saccharomyces cerevisiae (strain ATCC 204508 / S288c) (Baker's yeast) protein is Cystine transporter (ERS1).